A 373-amino-acid polypeptide reads, in one-letter code: MKALHFGAGNIGRGFIGSLLKTSGFELVFTDVNEAVINELNARGEYTVELAAPGQKQEIVGPVTAINSAQDPAALTEAVASADLITTAVGPAVLKIIASSIAEGLKQKNPDHIINIVACENMIGGSSHLKEAVFSHLTEEEQKALSQTVGFPNAAVDRIVPIQHHEDILKVSVEPFFEWVIDETGFIGDVPQIDGATFVQDLTPYIERKLFTVNTGHALAAYVGYQQGVQTIKEAVDTPEIRQVVEGALHETGSYLIDTYGFKKEEHDAYIQKIIKRFENVFISDEVTRVARSPLRKLGADDRLIGPAKKMKQPVYLIKGIAAALAYDFAEDEEAVRLQKLRKEKGIEGVLEEVCGLTPTDDLYQAILKETTR.

3–14 (ALHFGAGNIGRG) provides a ligand contact to NAD(+).

The protein belongs to the mannitol dehydrogenase family.

The catalysed reaction is D-mannitol 1-phosphate + NAD(+) = beta-D-fructose 6-phosphate + NADH + H(+). In Bacillus pumilus (strain SAFR-032), this protein is Mannitol-1-phosphate 5-dehydrogenase.